Here is a 508-residue protein sequence, read N- to C-terminus: Photosystem II CP47 reaction center protein (508 aa).

Helical transmembrane passes span 21-36 (AVHIMHTALVSGWAGS), 101-115 (IILSGLLFLAAIWHW), 140-156 (GIHLFLSGLLCFGFGAF), 203-218 (IAAGILGILAGLFHLS), 237-252 (VLSSSIAAVFWAAFVV), and 457-472 (NFALLFFFGHIWHGGR).

It belongs to the PsbB/PsbC family. PsbB subfamily. PSII is composed of 1 copy each of membrane proteins PsbA, PsbB, PsbC, PsbD, PsbE, PsbF, PsbH, PsbI, PsbJ, PsbK, PsbL, PsbM, PsbT, PsbX, PsbY, PsbZ, Psb30/Ycf12, at least 3 peripheral proteins of the oxygen-evolving complex and a large number of cofactors. It forms dimeric complexes. The cofactor is Binds multiple chlorophylls. PSII binds additional chlorophylls, carotenoids and specific lipids..

Its subcellular location is the plastid. It is found in the chloroplast thylakoid membrane. One of the components of the core complex of photosystem II (PSII). It binds chlorophyll and helps catalyze the primary light-induced photochemical processes of PSII. PSII is a light-driven water:plastoquinone oxidoreductase, using light energy to abstract electrons from H(2)O, generating O(2) and a proton gradient subsequently used for ATP formation. This is Photosystem II CP47 reaction center protein from Chaetosphaeridium globosum (Charophycean green alga).